Consider the following 284-residue polypeptide: Protein-S-isoprenylcysteine O-methyltransferase (284 aa).

The Cytoplasmic portion of the chain corresponds to 1–16 (MAGCAARVPPGSEARL). A helical membrane pass occupies residues 17-33 (SLATFLLGASVLALPLL). At 34 to 41 (TRAGLQGR) the chain is on the lumenal side. A helical transmembrane segment spans residues 42-59 (TGLALYVAGLNALLLLLY). Over 60–69 (RPPRYQIAIR) the chain is Cytoplasmic. Residues 70 to 87 (ACFLGFVFGCGVLLSFSQ) form a helical membrane-spanning segment. The Lumenal segment spans residues 88-92 (SSWNH). The helical transmembrane segment at 93–112 (FGWYVCSLSLFHYSEYLVTA) threads the bilayer. Over 113–131 (VNNPKSLSLDSFLLNHSLE) the chain is Cytoplasmic. The chain crosses the membrane as a helical span at residues 132 to 149 (YTVAALSSWIEFTLENIF). Over 150-154 (WPELK) the chain is Lumenal. The helical transmembrane segment at 155 to 174 (QITWLSAAGLLMVIFGECLR) threads the bilayer. The Cytoplasmic segment spans residues 175-212 (KVAMFTAGSNFNHVVQSEKSDTHTLVTSGVYAWCRHPS). Residues Gln190, 197-200 (HTLV), Tyr205, and 210-213 (HPSY) contribute to the S-adenosyl-L-methionine site. Residues 213 to 228 (YVGWFYWSIGTQVMLC) traverse the membrane as a helical segment. Residue Asn229 is a topological domain, lumenal. A helical transmembrane segment spans residues 230–244 (PICGVVYALTVWRFF). At 245 to 284 (RDRTEEEEISLIHFFGEEYLDYKKRVPTGLPFIKGVKVGL) the chain is on the cytoplasmic side. Residue Arg247 coordinates substrate. An S-adenosyl-L-methionine-binding site is contributed by Glu251.

Belongs to the class VI-like SAM-binding methyltransferase superfamily. Isoprenylcysteine carboxyl methyltransferase family.

Its subcellular location is the endoplasmic reticulum membrane. It catalyses the reaction [protein]-C-terminal S-[(2E,6E)-farnesyl]-L-cysteine + S-adenosyl-L-methionine = [protein]-C-terminal S-[(2E,6E)-farnesyl]-L-cysteine methyl ester + S-adenosyl-L-homocysteine. In terms of biological role, catalyzes the post-translational methylation of isoprenylated C-terminal cysteine residues. In Rattus norvegicus (Rat), this protein is Protein-S-isoprenylcysteine O-methyltransferase.